Consider the following 475-residue polypeptide: NADH-quinone oxidoreductase subunit N (475 aa).

The next 14 membrane-spanning stretches (helical) occupy residues 5-25, 32-52, 71-91, 99-119, 121-141, 155-175, 193-213, 232-252, 266-286, 294-314, 322-342, 366-386, 389-409, and 439-459; these read LALP…FGVV, FLSC…LVVM, FMKI…VGYA, FEFP…ASSE, LMTL…LCAF, YFVL…LVYG, STAV…GLTF, PTSV…ALLL, WQIL…LAAI, LMAY…CAGT, LVYL…IIAM, ATAM…AGFF, MMVF…IGVV, and LSLS…LLVL.

This sequence belongs to the complex I subunit 2 family. In terms of assembly, NDH-1 is composed of 14 different subunits. Subunits NuoA, H, J, K, L, M, N constitute the membrane sector of the complex.

The protein resides in the cell inner membrane. It catalyses the reaction a quinone + NADH + 5 H(+)(in) = a quinol + NAD(+) + 4 H(+)(out). Its function is as follows. NDH-1 shuttles electrons from NADH, via FMN and iron-sulfur (Fe-S) centers, to quinones in the respiratory chain. The immediate electron acceptor for the enzyme in this species is believed to be ubiquinone. Couples the redox reaction to proton translocation (for every two electrons transferred, four hydrogen ions are translocated across the cytoplasmic membrane), and thus conserves the redox energy in a proton gradient. This Gluconacetobacter diazotrophicus (strain ATCC 49037 / DSM 5601 / CCUG 37298 / CIP 103539 / LMG 7603 / PAl5) protein is NADH-quinone oxidoreductase subunit N.